Reading from the N-terminus, the 198-residue chain is Na(+)-translocating NADH-quinone reductase subunit E (198 aa).

6 helical membrane passes run 11–31 (SIFIENMALSFFLGMCTFLAV), 39–59 (FGLGVAVVVVLTIAVPVNNLV), 77–97 (FLNFITFIGVIAALVQILEMI), 110–130 (GIFLPLITVNCAIFGGVSFMV), 140–160 (VVYGFGAGVGWMLAIVALAGI), and 176–196 (LGITFITVGLMALGFMSFSGV).

It belongs to the NqrDE/RnfAE family. Composed of six subunits; NqrA, NqrB, NqrC, NqrD, NqrE and NqrF.

Its subcellular location is the cell inner membrane. The enzyme catalyses a ubiquinone + n Na(+)(in) + NADH + H(+) = a ubiquinol + n Na(+)(out) + NAD(+). Functionally, NQR complex catalyzes the reduction of ubiquinone-1 to ubiquinol by two successive reactions, coupled with the transport of Na(+) ions from the cytoplasm to the periplasm. NqrA to NqrE are probably involved in the second step, the conversion of ubisemiquinone to ubiquinol. The polypeptide is Na(+)-translocating NADH-quinone reductase subunit E (Vibrio vulnificus (strain CMCP6)).